The primary structure comprises 1399 residues: Dicer-like protein 2 (1399 aa).

In terms of domain architecture, Helicase ATP-binding spans 18–194 (MVEESMQSNI…EDLQQIERNL (177 aa)). Residue 31-38 (MDTGSGKT) participates in ATP binding. The short motif at 139–142 (DEAH) is the DEAH box element. Residues 364–549 (KLQLLIKFLV…QSETGHRNFE (186 aa)) enclose the Helicase C-terminal domain. In terms of domain architecture, Dicer dsRNA-binding fold spans 562–656 (ASQHLHHFCS…LPARQEADDE (95 aa)). RNase III domains follow at residues 897 to 1054 (LPSI…TVGG) and 1094 to 1270 (LDVL…IDSL). Mg(2+) contacts are provided by Glu-1133, Asp-1256, and Glu-1259. Residues 1301–1370 (HPKERLGHLA…AWKAVGVLES (70 aa)) enclose the DRBM domain.

The protein belongs to the helicase family. Dicer subfamily. The cofactor is Mg(2+). Mn(2+) serves as cofactor.

Its function is as follows. Dicer-like endonuclease involved in cleaving double-stranded RNA in the RNA interference (RNAi) pathway. Produces 21 to 25 bp dsRNAs (siRNAs) which target the selective destruction of homologous RNAs leading to sequence-specific suppression of gene expression, called post-transcriptional gene silencing (PTGS). Part of a broad host defense response against viral infection and transposons. The chain is Dicer-like protein 2 (DCL2) from Phaeosphaeria nodorum (strain SN15 / ATCC MYA-4574 / FGSC 10173) (Glume blotch fungus).